Reading from the N-terminus, the 614-residue chain is Leucine-rich repeat and immunoglobulin-like domain-containing nogo receptor-interacting protein 1 (614 aa).

A signal peptide spans 1–35; the sequence is MLAGGVRSMPSPLLACWQPILLLVLGSVLSGSATG. 2 cysteine pairs are disulfide-bonded: cysteine 36–cysteine 42 and cysteine 40–cysteine 51. The LRRNT domain occupies 36–65; sequence CPPRCECSAQDRAVLCHRKRFVAVPEGIPT. Over 36–555 the chain is Extracellular; that stretch reads CPPRCECSAQ…FDIKTLIIAT (520 aa). 11 LRR repeats span residues 66–87, 90–111, 114–135, 138–159, 162–183, 186–207, 210–231, 258–279, 282–303, 306–327, and 330–351; these read ETRL…EFAS, HLEE…AFNN, NLRT…VFTG, NLTK…MFQD, NLKS…AFSG, SLEQ…ALSH, GLIV…SFKR, NLTS…AVRH, YLRF…MLHE, RLQE…AFRG, and YLRV…VFHS. A glycan (N-linked (GlcNAc...) asparagine) is linked at asparagine 138. N-linked (GlcNAc...) asparagine glycosylation is present at asparagine 196. N-linked (GlcNAc...) asparagine glycans are attached at residues asparagine 258, asparagine 268, and asparagine 287. Asparagine 335 carries N-linked (GlcNAc...) asparagine glycosylation. In terms of domain architecture, LRRCT spans 363–417; the sequence is NPLACDCRLLWVFRRRWRLNFNRQQPTCATPEFVQGKEFKDFPDVLLPNYFTCRR. 3 disulfide bridges follow: cysteine 367/cysteine 390, cysteine 369/cysteine 415, and cysteine 440/cysteine 491. Positions 405–507 constitute an Ig-like C2-type domain; the sequence is PDVLLPNYFT…GNDSMPAHLH (103 aa). N-linked (GlcNAc...) asparagine glycans are attached at residues asparagine 486 and asparagine 536. Residues 556-576 form a helical membrane-spanning segment; the sequence is TMGFISFLGVVLFCLVLLFLW. The Cytoplasmic segment spans residues 577 to 614; that stretch reads SRGKGNTKHNIEIEYVPRKSDAGISSADAPRKFNMKMI. Residue serine 596 is modified to Phosphoserine.

In terms of assembly, homotetramer. Forms a ternary complex with RTN4R/NGFR and RTN4R/TNFRSF19. Interacts with NGRF, RTN4R and MYT1L. In terms of processing, N-glycosylated. Contains predominantly high-mannose glycans.

It localises to the cell membrane. Functional component of the Nogo receptor signaling complex (RTN4R/NGFR) in RhoA activation responsible for some inhibition of axonal regeneration by myelin-associated factors. Is also an important negative regulator of oligodentrocyte differentiation and axonal myelination. Acts in conjunction with RTN4 and RTN4R in regulating neuronal precursor cell motility during cortical development. This Macaca fascicularis (Crab-eating macaque) protein is Leucine-rich repeat and immunoglobulin-like domain-containing nogo receptor-interacting protein 1 (LINGO1).